We begin with the raw amino-acid sequence, 504 residues long: L-carnitine/gamma-butyrobetaine antiporter (504 aa).

Transmembrane regions (helical) follow at residues 10–30 (IEPKVFFPPLIIVGILCWLTV), 51–71 (WGWAFEWYMVVMLFGWFWLVF), 92–112 (IFMMFASCTSAAVLFWGSIEI), 143–163 (GPLPWATYSFLSVAFAYFFFV), 195–215 (FYLVALIFAMGTSLGLATPLV), 231–251 (LDAIIITCWIILNAICVACGL), 263–283 (SYLSFLMLGWVFIVSGASFIM), 316–336 (WTVFYWAWWVIYAIQMSIFLA), 347–367 (LCFGMVMGLTASTWILWTVLG), 403–423 (LSTATMWGFFILCFIATVTLI), 446–466 (LLVRIGWSILVGIIGIVLLAL), and 475–495 (AIIAGGCPLFFVNIMVTLSFI).

The protein belongs to the BCCT transporter (TC 2.A.15) family. CaiT subfamily. In terms of assembly, homotrimer.

It localises to the cell inner membrane. The catalysed reaction is 4-(trimethylamino)butanoate(in) + (R)-carnitine(out) = 4-(trimethylamino)butanoate(out) + (R)-carnitine(in). It functions in the pathway amine and polyamine metabolism; carnitine metabolism. In terms of biological role, catalyzes the exchange of L-carnitine for gamma-butyrobetaine. The chain is L-carnitine/gamma-butyrobetaine antiporter from Escherichia fergusonii (strain ATCC 35469 / DSM 13698 / CCUG 18766 / IAM 14443 / JCM 21226 / LMG 7866 / NBRC 102419 / NCTC 12128 / CDC 0568-73).